We begin with the raw amino-acid sequence, 127 residues long: Glycine cleavage system H protein (127 aa).

Residues 22 to 104 form the Lipoyl-binding domain; the sequence is KVRIGITDFA…YEKAWMIVVE (83 aa). The residue at position 63 (lysine 63) is an N6-lipoyllysine.

Belongs to the GcvH family. As to quaternary structure, the glycine cleavage system is composed of four proteins: P, T, L and H. It depends on (R)-lipoate as a cofactor.

Functionally, the glycine cleavage system catalyzes the degradation of glycine. The H protein shuttles the methylamine group of glycine from the P protein to the T protein. Is also involved in protein lipoylation via its role as an octanoyl/lipoyl carrier protein intermediate. The protein is Glycine cleavage system H protein of Geobacillus sp. (strain WCH70).